Consider the following 82-residue polypeptide: Cytochrome b559 subunit alpha (82 aa).

Residues 22–36 (IIHAVALPAIFVAGF) traverse the membrane as a helical segment. His-24 serves as a coordination point for heme.

This sequence belongs to the PsbE/PsbF family. Heterodimer of an alpha subunit and a beta subunit. PSII is composed of 1 copy each of membrane proteins PsbA, PsbB, PsbC, PsbD, PsbE, PsbF, PsbH, PsbI, PsbJ, PsbK, PsbL, PsbM, PsbT, PsbX, PsbY, Psb30/Ycf12, peripheral proteins PsbO, CyanoQ (PsbQ), PsbU, PsbV and a large number of cofactors. It forms dimeric complexes. The cofactor is heme b.

The protein localises to the cellular thylakoid membrane. This b-type cytochrome is tightly associated with the reaction center of photosystem II (PSII). PSII is a light-driven water:plastoquinone oxidoreductase that uses light energy to abstract electrons from H(2)O, generating O(2) and a proton gradient subsequently used for ATP formation. It consists of a core antenna complex that captures photons, and an electron transfer chain that converts photonic excitation into a charge separation. The polypeptide is Cytochrome b559 subunit alpha (Prochlorococcus marinus (strain NATL1A)).